The chain runs to 199 residues: Probable GTP-binding protein EngB (199 aa).

Residues 22–196 (NFSEVAFLGR…EDVIINQTLG (175 aa)) enclose the EngB-type G domain. GTP-binding positions include 30–37 (GRSNVGKS), 57–61 (GKTQL), 82–85 (DLPG), 152–155 (TKCD), and 175–177 (VSN). Mg(2+) is bound by residues S37 and T59.

The protein belongs to the TRAFAC class TrmE-Era-EngA-EngB-Septin-like GTPase superfamily. EngB GTPase family. Requires Mg(2+) as cofactor.

Necessary for normal cell division and for the maintenance of normal septation. This is Probable GTP-binding protein EngB from Campylobacter jejuni subsp. doylei (strain ATCC BAA-1458 / RM4099 / 269.97).